A 130-amino-acid chain; its full sequence is Small ribosomal subunit protein uS9 (130 aa).

The segment at 108-130 (SREVERKKVGLRKARKRPQYSKR) is disordered. The segment covering 116–130 (VGLRKARKRPQYSKR) has biased composition (basic residues).

Belongs to the universal ribosomal protein uS9 family.

This Cellvibrio japonicus (strain Ueda107) (Pseudomonas fluorescens subsp. cellulosa) protein is Small ribosomal subunit protein uS9.